Reading from the N-terminus, the 411-residue chain is Growth-regulating factor 7 (411 aa).

One can recognise a QLQ domain in the interval Pro-38–Arg-73. Residues Asp-108 to Gly-152 form the WRC domain. Short sequence motifs (bipartite nuclear localization signal) lie at residues Arg-113–Arg-123 and Arg-141–Lys-148. Residues Phe-333–Pro-369 form a disordered region. Residues His-360–Pro-369 are compositionally biased toward polar residues.

It belongs to the GRF family.

It localises to the nucleus. Functionally, transcription activator that plays a regulatory role in gibberellin-induced stem elongation. The chain is Growth-regulating factor 7 (GRF7) from Oryza sativa subsp. japonica (Rice).